Consider the following 218-residue polypeptide: Cytidylate kinase (218 aa).

Position 7–15 (7–15 (GPSASGKSS)) interacts with ATP.

The protein belongs to the cytidylate kinase family. Type 1 subfamily.

It is found in the cytoplasm. It carries out the reaction CMP + ATP = CDP + ADP. It catalyses the reaction dCMP + ATP = dCDP + ADP. The protein is Cytidylate kinase of Borrelia duttonii (strain Ly).